The following is a 352-amino-acid chain: uncharacterized protein (352 aa).

Residues Met-1–Ser-55 constitute a chloroplast transit peptide.

It belongs to the methyltransferase superfamily.

It localises to the plastid. Its subcellular location is the chloroplast. The protein localises to the plastoglobule. This is an uncharacterized protein from Arabidopsis thaliana (Mouse-ear cress).